Consider the following 177-residue polypeptide: Large ribosomal subunit protein uL5 (177 aa).

It belongs to the universal ribosomal protein uL5 family. As to quaternary structure, part of the 50S ribosomal subunit; part of the 5S rRNA/L5/L18/L25 subcomplex. Contacts the 5S rRNA and the P site tRNA. Forms a bridge to the 30S subunit in the 70S ribosome.

Its function is as follows. This is one of the proteins that bind and probably mediate the attachment of the 5S RNA into the large ribosomal subunit, where it forms part of the central protuberance. In the 70S ribosome it contacts protein S13 of the 30S subunit (bridge B1b), connecting the 2 subunits; this bridge is implicated in subunit movement. Contacts the P site tRNA; the 5S rRNA and some of its associated proteins might help stabilize positioning of ribosome-bound tRNAs. The chain is Large ribosomal subunit protein uL5 from Ehrlichia chaffeensis (strain ATCC CRL-10679 / Arkansas).